Here is a 206-residue protein sequence, read N- to C-terminus: Large ribosomal subunit protein uL22m (206 aa).

The transit peptide at 1 to 40 (MAAALLRELGALWVPNLRIWTTQMLRVLPQSCIHTSTSLD) directs the protein to the mitochondrion.

The protein belongs to the universal ribosomal protein uL22 family. As to quaternary structure, component of the mitochondrial ribosome large subunit (39S) which comprises a 16S rRNA and about 50 distinct proteins.

It is found in the mitochondrion. This is Large ribosomal subunit protein uL22m (Mrpl22) from Rattus norvegicus (Rat).